The sequence spans 92 residues: Small ribosomal subunit protein uS19c (92 aa).

It belongs to the universal ribosomal protein uS19 family.

It localises to the plastid. The protein localises to the chloroplast. Its function is as follows. Protein S19 forms a complex with S13 that binds strongly to the 16S ribosomal RNA. This chain is Small ribosomal subunit protein uS19c, found in Cucumis sativus (Cucumber).